Consider the following 618-residue polypeptide: Baculoviral IAP repeat-containing protein 2 (618 aa).

BIR repeat units lie at residues 46–113 (ELYR…CSFI), 184–250 (EEAR…CPFL), and 269–336 (HAAR…CEFL). Cys-306, Cys-309, His-326, and Cys-333 together coordinate Zn(2+). The region spanning 453 to 543 (MASDDLSLIR…TLYKNLFVDK (91 aa)) is the CARD domain. An RING-type zinc finger spans residues 571-606 (CKVCMDKEVSVVFIPCGHLVVCQECAPSLRKCPICR).

Belongs to the IAP family. As to quaternary structure, interacts with DIABLO/SMAC and with PRSS25; these interactions inhibit apoptotic suppressor activity. Interacts with CASP9. Interacts (via BIR domains) with TRAF2; the interaction is required for IKBKE ubiquitination. Interacts with E2F1, RIPK1, RIPK2, RIPK3, RIPK4, BIRC5/survivin and USP19. HSP90AB1. Interacts with UBXN1. Interacts with GSK3B. Interacts with several death receptors, inclusing FAS, TNFRSF10A and TNFRSF10B. Recruited to TNFRSF10B in the absence of receptor stimulation. When TNFRSF10B is stimulated, further recruited to the receptor and cleaved by caspases. Proteolytic fragments remain associated with TNFRSF10B. Post-translationally, auto-ubiquitinated and degraded by the proteasome in apoptotic cells. Upon stimulation of death receptors, including TNFRSF10B, recruited to receptors and cleaved by caspases. Proteolytic fragments remain associated with the receptors. This cleavage presumably inactivates the protein. In terms of tissue distribution, present in many fetal and adult tissues. Mainly expressed in adult skeletal muscle, thymus, testis, ovary, and pancreas, low or absent in brain and peripheral blood leukocytes.

Its subcellular location is the cytoplasm. The protein resides in the nucleus. It catalyses the reaction S-ubiquitinyl-[E2 ubiquitin-conjugating enzyme]-L-cysteine + [acceptor protein]-L-lysine = [E2 ubiquitin-conjugating enzyme]-L-cysteine + N(6)-ubiquitinyl-[acceptor protein]-L-lysine.. The CARD domain inhibits the activation of E3 ubiquitin ligase activity by preventing RING domain dimerization and E2 ubiquitin donor binding and activation. The CARD domain-mediated autoinhibition of the E3 ubiquitin-protein ligase activity suppresses cell proliferation and migration. USP19 regulates the stability of BIRC2/c-IAP1 by preventing its ubiquitination. Its function is as follows. Multi-functional protein which regulates not only caspases and apoptosis, but also modulates inflammatory signaling and immunity, mitogenic kinase signaling, and cell proliferation, as well as cell invasion and metastasis. Acts as an E3 ubiquitin-protein ligase regulating NF-kappa-B signaling and regulates both canonical and non-canonical NF-kappa-B signaling by acting in opposite directions: acts as a positive regulator of the canonical pathway and suppresses constitutive activation of non-canonical NF-kappa-B signaling. The target proteins for its E3 ubiquitin-protein ligase activity include: RIPK1, RIPK2, RIPK3, RIPK4, CASP3, CASP7, CASP8, TRAF2, DIABLO/SMAC, MAP3K14/NIK, MAP3K5/ASK1, IKBKG/NEMO, IKBKE and MXD1/MAD1. Can also function as an E3 ubiquitin-protein ligase of the NEDD8 conjugation pathway, targeting effector caspases for neddylation and inactivation. Acts as an important regulator of innate immune signaling via regulation of Toll-like receptors (TLRs), Nodlike receptors (NLRs) and RIG-I like receptors (RLRs), collectively referred to as pattern recognition receptors (PRRs). Protects cells from spontaneous formation of the ripoptosome, a large multi-protein complex that has the capability to kill cancer cells in a caspase-dependent and caspase-independent manner. Suppresses ripoptosome formation by ubiquitinating RIPK1 and CASP8. Can stimulate the transcriptional activity of E2F1. Plays a role in the modulation of the cell cycle. In Homo sapiens (Human), this protein is Baculoviral IAP repeat-containing protein 2 (BIRC2).